The sequence spans 339 residues: NmrA-like family domain-containing oxidoreductase cpsB (339 aa).

Lys142 lines the NADP(+) pocket.

It belongs to the NmrA-type oxidoreductase family.

It catalyses the reaction didehydrocampesine A + 2 AH2 = campesine A + 2 A. The protein operates within alkaloid biosynthesis. Functionally, oxidoreductase; part of the gene cluster that mediates the biosynthesis of campesine G, a dimeric indole piperazine alkaloid that shows good insecticidal activity Galleria mellonella. Within the pathway, cpsB reduces the unstable (S,S)-trypyl-valyl dihydropiperazine (didehydrocampesine A) intermediate to (S, S)-trypyl-valyl-piperazine (campesine A) using two equivalents of NAD(P)H. The non-canonical non-ribosomal peptide synthetase cpsA catalyzes the first steps of the pathway by producing L-tryptophanal and L-valinal from their respective amino-acids. These products condensate spontaneously to form trypyl-valyl pyrazine also known as didehydrocampesine A. The NmrA-like family domain-containing oxidoreductase cpsB is the next enzyme in cps pathway and reduces the unstable didehydrocampesine A to campesine A. The methyltransferase cpsF and the acetyltransferase cpsE both recognize N13 of piperazine ring to carry out methylation and acetylation of campesine A to produce campesine C and B, respectively. The cytochrome P450 monooxygenase cpsD then acts as a dimerase that catalyzes oxidative heterocoupling between campesine B and C to produce heterodimers with unexpected 6/5/6/6/6/6/5/6 eight-ring scaffold called campesine D. Finally,the cytochrome P450 monooxygenase cpsC is a regioselective dehydrogenase that catalyzes dehydrogenation reaction towards C2-N1 to produce campesine G. The chain is NmrA-like family domain-containing oxidoreductase cpsB from Aspergillus campestris (strain IBT 28561).